The chain runs to 114 residues: Nucleoid-associated protein Clos_2855 (114 aa).

The protein belongs to the YbaB/EbfC family. As to quaternary structure, homodimer.

The protein localises to the cytoplasm. It is found in the nucleoid. In terms of biological role, binds to DNA and alters its conformation. May be involved in regulation of gene expression, nucleoid organization and DNA protection. This Alkaliphilus oremlandii (strain OhILAs) (Clostridium oremlandii (strain OhILAs)) protein is Nucleoid-associated protein Clos_2855.